The primary structure comprises 480 residues: 2-succinylbenzoate--CoA ligase (480 aa).

It belongs to the ATP-dependent AMP-binding enzyme family. MenE subfamily.

It catalyses the reaction 2-succinylbenzoate + ATP + CoA = 2-succinylbenzoyl-CoA + AMP + diphosphate. The protein operates within quinol/quinone metabolism; 1,4-dihydroxy-2-naphthoate biosynthesis; 1,4-dihydroxy-2-naphthoate from chorismate: step 5/7. It participates in quinol/quinone metabolism; menaquinone biosynthesis. Functionally, converts 2-succinylbenzoate (OSB) to 2-succinylbenzoyl-CoA (OSB-CoA). In Oceanobacillus iheyensis (strain DSM 14371 / CIP 107618 / JCM 11309 / KCTC 3954 / HTE831), this protein is 2-succinylbenzoate--CoA ligase.